Consider the following 236-residue polypeptide: Small ribosomal subunit protein bS21m (236 aa).

The segment at 65-136 (KPAAGAAAGG…SSKPSPMQTW (72 aa)) is disordered. Positions 107–131 (SNSSTSSSSSSSSSGGALYSSSKPS) are enriched in low complexity.

It belongs to the bacterial ribosomal protein bS21 family. As to quaternary structure, component of the mitochondrial small ribosomal subunit (mt-SSU). Mature N.crassa 74S mitochondrial ribosomes consist of a small (37S) and a large (54S) subunit. The 37S small subunit contains a 16S ribosomal RNA (16S mt-rRNA) and 32 different proteins. The 54S large subunit contains a 23S rRNA (23S mt-rRNA) and 42 different proteins.

The protein localises to the mitochondrion. In terms of biological role, component of the mitochondrial ribosome (mitoribosome), a dedicated translation machinery responsible for the synthesis of mitochondrial genome-encoded proteins, including at least some of the essential transmembrane subunits of the mitochondrial respiratory chain. The mitoribosomes are attached to the mitochondrial inner membrane and translation products are cotranslationally integrated into the membrane. This Neurospora crassa (strain ATCC 24698 / 74-OR23-1A / CBS 708.71 / DSM 1257 / FGSC 987) protein is Small ribosomal subunit protein bS21m (mrp21).